The following is a 288-amino-acid chain: Acetyl-coenzyme A carboxylase carboxyl transferase subunit beta (288 aa).

A CoA carboxyltransferase N-terminal domain is found at 34-288 (LFAKCPACKH…HLVAFHGGGQ (255 aa)). C38, C41, C56, and C59 together coordinate Zn(2+). Residues 38–59 (CPACKHMIYKKDLGLAKICPTC) form a C4-type zinc finger.

This sequence belongs to the AccD/PCCB family. In terms of assembly, acetyl-CoA carboxylase is a heterohexamer composed of biotin carboxyl carrier protein (AccB), biotin carboxylase (AccC) and two subunits each of ACCase subunit alpha (AccA) and ACCase subunit beta (AccD). It depends on Zn(2+) as a cofactor.

The protein resides in the cytoplasm. The enzyme catalyses N(6)-carboxybiotinyl-L-lysyl-[protein] + acetyl-CoA = N(6)-biotinyl-L-lysyl-[protein] + malonyl-CoA. Its pathway is lipid metabolism; malonyl-CoA biosynthesis; malonyl-CoA from acetyl-CoA: step 1/1. In terms of biological role, component of the acetyl coenzyme A carboxylase (ACC) complex. Biotin carboxylase (BC) catalyzes the carboxylation of biotin on its carrier protein (BCCP) and then the CO(2) group is transferred by the transcarboxylase to acetyl-CoA to form malonyl-CoA. This is Acetyl-coenzyme A carboxylase carboxyl transferase subunit beta from Streptococcus pyogenes serotype M28 (strain MGAS6180).